We begin with the raw amino-acid sequence, 464 residues long: NADH-quinone oxidoreductase subunit N 1 (464 aa).

The next 14 membrane-spanning stretches (helical) occupy residues 6–26 (ILPE…ELFL), 33–53 (FLSV…FFVN), 65–85 (VDAL…FVLL), 98–118 (YGEL…MISS), 122–142 (AIIF…VGLF), 155–175 (YLVI…LVYA), 192–212 (FALG…AVPF), 237–257 (IGMY…FPDW), 259–279 (YVVM…AYAQ), 285–305 (LLAY…TAVD), 312–332 (LLFY…VLAI), 356–376 (LASM…AAVF), 401–421 (ASLI…LYSG), and 436–456 (FTVL…HVVL).

The protein belongs to the complex I subunit 2 family. As to quaternary structure, NDH-1 is composed of 14 different subunits. Subunits NuoA, H, J, K, L, M, N constitute the membrane sector of the complex.

It is found in the cell inner membrane. The catalysed reaction is a quinone + NADH + 5 H(+)(in) = a quinol + NAD(+) + 4 H(+)(out). In terms of biological role, NDH-1 shuttles electrons from NADH, via FMN and iron-sulfur (Fe-S) centers, to quinones in the respiratory chain. The immediate electron acceptor for the enzyme in this species is believed to be ubiquinone. Couples the redox reaction to proton translocation (for every two electrons transferred, four hydrogen ions are translocated across the cytoplasmic membrane), and thus conserves the redox energy in a proton gradient. This Aquifex aeolicus (strain VF5) protein is NADH-quinone oxidoreductase subunit N 1.